The primary structure comprises 156 residues: 6,7-dimethyl-8-ribityllumazine synthase (156 aa).

Residues Phe22, Ala57–Glu59, and Thr81–Ile83 contribute to the 5-amino-6-(D-ribitylamino)uracil site. Gly86–Thr87 lines the (2S)-2-hydroxy-3-oxobutyl phosphate pocket. His89 (proton donor) is an active-site residue. Phe114 is a 5-amino-6-(D-ribitylamino)uracil binding site. Arg128 provides a ligand contact to (2S)-2-hydroxy-3-oxobutyl phosphate.

It belongs to the DMRL synthase family. As to quaternary structure, forms an icosahedral capsid composed of 60 subunits, arranged as a dodecamer of pentamers.

It catalyses the reaction (2S)-2-hydroxy-3-oxobutyl phosphate + 5-amino-6-(D-ribitylamino)uracil = 6,7-dimethyl-8-(1-D-ribityl)lumazine + phosphate + 2 H2O + H(+). Its pathway is cofactor biosynthesis; riboflavin biosynthesis; riboflavin from 2-hydroxy-3-oxobutyl phosphate and 5-amino-6-(D-ribitylamino)uracil: step 1/2. Functionally, catalyzes the formation of 6,7-dimethyl-8-ribityllumazine by condensation of 5-amino-6-(D-ribitylamino)uracil with 3,4-dihydroxy-2-butanone 4-phosphate. This is the penultimate step in the biosynthesis of riboflavin. This chain is 6,7-dimethyl-8-ribityllumazine synthase, found in Photorhabdus laumondii subsp. laumondii (strain DSM 15139 / CIP 105565 / TT01) (Photorhabdus luminescens subsp. laumondii).